An 862-amino-acid polypeptide reads, in one-letter code: Probable disease resistance protein At5g43740 (862 aa).

Positions 24 to 61 form a coiled coil; that stretch reads RNYIHMMESNLDALQKTMEELKNGRDDLLGRVSIEEDK. The region spanning 135–438 is the NB-ARC domain; that stretch reads MVAQEIIHKV…CEGFINPNRY (304 aa). 178–185 provides a ligand contact to ATP; it reads GMGGVGKT. LRR repeat units lie at residues 511-532, 533-555, 558-580, and 582-604; these read IVRTMSFTCTQIKKISCRSKCP, NLSTLLILDNRLLVKISNRFFRF, KLVVLDLSANLDLIKLPEEISNL, and SLQYLNISLTGIKSLPVGLKKLR.

Belongs to the disease resistance NB-LRR family.

Probable disease resistance protein. This Arabidopsis thaliana (Mouse-ear cress) protein is Probable disease resistance protein At5g43740.